Reading from the N-terminus, the 78-residue chain is NAD(P)H-quinone oxidoreductase subunit O (78 aa).

The protein belongs to the complex I NdhO subunit family. NDH-1 can be composed of about 15 different subunits; different subcomplexes with different compositions have been identified which probably have different functions.

The protein localises to the cellular thylakoid membrane. The enzyme catalyses a plastoquinone + NADH + (n+1) H(+)(in) = a plastoquinol + NAD(+) + n H(+)(out). It catalyses the reaction a plastoquinone + NADPH + (n+1) H(+)(in) = a plastoquinol + NADP(+) + n H(+)(out). In terms of biological role, NDH-1 shuttles electrons from an unknown electron donor, via FMN and iron-sulfur (Fe-S) centers, to quinones in the respiratory and/or the photosynthetic chain. The immediate electron acceptor for the enzyme in this species is believed to be plastoquinone. Couples the redox reaction to proton translocation, and thus conserves the redox energy in a proton gradient. Cyanobacterial NDH-1 also plays a role in inorganic carbon-concentration. The chain is NAD(P)H-quinone oxidoreductase subunit O from Prochlorococcus marinus (strain MIT 9312).